Reading from the N-terminus, the 519-residue chain is Xylose import ATP-binding protein XylG (519 aa).

ABC transporter domains are found at residues 6 to 245 and 262 to 507; these read LTMR…VGRE and LDVR…LKPA. ATP is bound at residue 38-45; it reads GENGAGKS.

Belongs to the ABC transporter superfamily. Xylose importer (TC 3.A.1.2.4) family. The complex is composed of two ATP-binding proteins (XylG), two transmembrane proteins (XylH) and a solute-binding protein (XylF).

Its subcellular location is the cell inner membrane. It catalyses the reaction D-xylose(out) + ATP + H2O = D-xylose(in) + ADP + phosphate + H(+). In terms of biological role, part of the ABC transporter complex XylFGH involved in xylose import. Responsible for energy coupling to the transport system. The sequence is that of Xylose import ATP-binding protein XylG from Burkholderia cenocepacia (strain HI2424).